Consider the following 246-residue polypeptide: rRNA methyltransferase 2, mitochondrial (246 aa).

The transit peptide at 1–18 (MAGYLKLVCVSFQRQGFH) directs the protein to the mitochondrion. S-adenosyl-L-methionine is bound by residues 83–86 (PGAW), D112, 129–130 (DV), and D154. K194 (proton acceptor) is an active-site residue.

Belongs to the class I-like SAM-binding methyltransferase superfamily. RNA methyltransferase RlmE family. In terms of tissue distribution, widely expressed, with highest expression in muscle, placenta, and heart.

The protein resides in the mitochondrion. It catalyses the reaction uridine(1369) in 16S rRNA + S-adenosyl-L-methionine = 2'-O-methyluridine(1369) in 16S rRNA + S-adenosyl-L-homocysteine + H(+). S-adenosyl-L-methionine-dependent 2'-O-ribose methyltransferase that catalyzes the formation of 2'-O-methyluridine at position 1369 (Um1369) in the 16S mitochondrial large subunit ribosomal RNA (mtLSU rRNA), a universally conserved modification in the peptidyl transferase domain of the mtLSU rRNA. This activity may require prior 2'-O-methylguanosine modification at position 1370 (Gm1370) by MRM3. Essential for late-stage assembly of mtLSU required for efficient translation of mitochondrial DNA encoded proteins; methyltransferase activity is not required for this function. Essential for mitochondrial respiratory function. This Homo sapiens (Human) protein is rRNA methyltransferase 2, mitochondrial.